The sequence spans 890 residues: Calcium-transporting ATPase (890 aa).

Over 1 to 47 (MKFHEMGQTDLLEATNTSMKQGLTEKEVKKRLDKHGPNELQEGKKTS) the chain is Cytoplasmic. A helical transmembrane segment spans residues 48 to 68 (ALLLFFAQFKDFMVLVLLAAT). Residues 69–78 (LISGFLGEYV) are Extracellular-facing. The helical transmembrane segment at 79-99 (DAVAIIAIVFVNGILGFFQER) threads the bilayer. The Cytoplasmic portion of the chain corresponds to 100–238 (RAEQSLQALK…TLSTPLQRRL (139 aa)). The chain crosses the membrane as a helical span at residues 239–258 (EQLGKILIVVALLLTVLVVA). The Extracellular portion of the chain corresponds to 259–270 (VGVIQGHDLYSM). Residues 271–288 (FLAGVSLAVAAIPEGLPA) traverse the membrane as a helical segment. Ca(2+) contacts are provided by Val279, Ala280, Ile282, and Glu284. Topologically, residues 289 to 688 (IVTVALSLGV…KEGRNIYENI (400 aa)) are cytoplasmic. Asp326 acts as the 4-aspartylphosphate intermediate in catalysis. Mg(2+)-binding residues include Asp633 and Asp637. A helical membrane pass occupies residues 689–708 (RKFIRYLLASNVGEILVMLF). Positions 699 and 702 each coordinate Ca(2+). Residues 709-718 (AMLLALPLPL) are Extracellular-facing. Residues 719–739 (VPIQILWVNLVTDGLPAMALG) traverse the membrane as a helical segment. Residues Asn727, Thr730, and Asp731 each contribute to the Ca(2+) site. Over 740–759 (MDQPEGDVMKRKPRHPKEGV) the chain is Cytoplasmic. A helical membrane pass occupies residues 760–782 (FARKLGWKVVSRGFLIGVATILA). The Extracellular segment spans residues 783–798 (FIIVYHRNPENLAYAQ). Residues 799-818 (TIAFATLVLAQLIHVFDCRS) form a helical membrane-spanning segment. Residues 819 to 830 (ETSVFSRNPFQN) are Cytoplasmic-facing. The helical transmembrane segment at 831–849 (LYLIGAVLSSILLMLVVIY) threads the bilayer. Residues 850–864 (YPPLQPIFHTVAITP) lie on the Extracellular side of the membrane. A helical membrane pass occupies residues 865–885 (GDWMLVIGMSAIPTFLLAGSL). Over 886-890 (LTRKK) the chain is Cytoplasmic.

Belongs to the cation transport ATPase (P-type) (TC 3.A.3) family. Type IIA subfamily. Phosphorylated in a Ca(2+)-dependent manner starting 4 hours after shifting to sporulation medium.

It is found in the cell membrane. The enzyme catalyses Ca(2+)(in) + ATP + H2O = Ca(2+)(out) + ADP + phosphate + H(+). Its function is as follows. This magnesium-dependent enzyme catalyzes the hydrolysis of ATP coupled with the transport of calcium. The polypeptide is Calcium-transporting ATPase (yloB) (Bacillus subtilis (strain 168)).